Consider the following 313-residue polypeptide: Lactamase-like protein ptaB (313 aa).

His-104, His-106, Asp-108, and His-109 together coordinate Zn(2+). Asp-108 functions as the Proton donor/acceptor in the catalytic mechanism.

This sequence belongs to the metallo-beta-lactamase superfamily. Requires Zn(2+) as cofactor.

It carries out the reaction atrochrysone carboxyl-[ACP] + H2O = atrochrysone carboxylate + holo-[ACP] + H(+). It participates in secondary metabolite biosynthesis. Functionally, lactamase-like protein; part of the gene cluster that mediates the biosynthesis of pestheic acid, a diphenyl ether which is a biosynthetic precursor of the unique chloropupukeananes. The biosynthesis initiates from condensation of acetate and malonate units catalyzed by the non-reducing PKS ptaA. As the ptaA protein is TE/CLC domain-deficient, hydrolysis and Claisen cyclization of the polyketide could be catalyzed by ptaB containing a beta-lactamase domain. The ptaB protein might hydrolyze the thioester bond between the ACP of ptaA and the intermediate to release atrochrysone carboxylic acid, which is spontaneously dehydrated to form endocrocin anthrone. Endocrocin anthrone is then converted to endocrocin, catalyzed by the anthrone oxygenase ptaC. Spontaneous decarboxylation of endocrocin occurs to generate emodin. An O-methyltransferase (ptaH or ptaI) could methylate emodin to form physcion. PtaJ could then catalyze the oxidative cleavage of physcion, and rotation of the intermediate could then afford desmethylisosulochrin. PtaF, a putative NADH-dependent oxidoreductase, might also participate in the oxidative cleavage step. Desmethylisosulochrin is then transformed by another O-methyltransferase (ptaH or ptaI) to form isosulochrin. Chlorination of isosulochrin by ptaM in the cyclohexadienone B ring then produces chloroisosulochrin. PtaE is responsible for the oxidative coupling reactions of both benzophenones isosulochrin and chloroisosulochrin to RES-1214-1 and pestheic acid respectively, regardless of chlorination. This Pestalotiopsis fici (strain W106-1 / CGMCC3.15140) protein is Lactamase-like protein ptaB.